A 204-amino-acid polypeptide reads, in one-letter code: Thiamine-phosphate synthase (204 aa).

Residues Gln-32–Lys-36 and Asp-64 each bind 4-amino-2-methyl-5-(diphosphooxymethyl)pyrimidine. The Mg(2+) site is built by Asp-65 and Asp-84. Thr-103 provides a ligand contact to 4-amino-2-methyl-5-(diphosphooxymethyl)pyrimidine. Thr-129–Thr-131 lines the 2-[(2R,5Z)-2-carboxy-4-methylthiazol-5(2H)-ylidene]ethyl phosphate pocket. A 4-amino-2-methyl-5-(diphosphooxymethyl)pyrimidine-binding site is contributed by Lys-132. 2-[(2R,5Z)-2-carboxy-4-methylthiazol-5(2H)-ylidene]ethyl phosphate is bound at residue Gly-165.

The protein belongs to the thiamine-phosphate synthase family. Mg(2+) is required as a cofactor.

The catalysed reaction is 2-[(2R,5Z)-2-carboxy-4-methylthiazol-5(2H)-ylidene]ethyl phosphate + 4-amino-2-methyl-5-(diphosphooxymethyl)pyrimidine + 2 H(+) = thiamine phosphate + CO2 + diphosphate. It catalyses the reaction 2-(2-carboxy-4-methylthiazol-5-yl)ethyl phosphate + 4-amino-2-methyl-5-(diphosphooxymethyl)pyrimidine + 2 H(+) = thiamine phosphate + CO2 + diphosphate. It carries out the reaction 4-methyl-5-(2-phosphooxyethyl)-thiazole + 4-amino-2-methyl-5-(diphosphooxymethyl)pyrimidine + H(+) = thiamine phosphate + diphosphate. Its pathway is cofactor biosynthesis; thiamine diphosphate biosynthesis; thiamine phosphate from 4-amino-2-methyl-5-diphosphomethylpyrimidine and 4-methyl-5-(2-phosphoethyl)-thiazole: step 1/1. Its function is as follows. Condenses 4-methyl-5-(beta-hydroxyethyl)thiazole monophosphate (THZ-P) and 2-methyl-4-amino-5-hydroxymethyl pyrimidine pyrophosphate (HMP-PP) to form thiamine monophosphate (TMP). This Bacteroides fragilis (strain ATCC 25285 / DSM 2151 / CCUG 4856 / JCM 11019 / LMG 10263 / NCTC 9343 / Onslow / VPI 2553 / EN-2) protein is Thiamine-phosphate synthase.